A 442-amino-acid polypeptide reads, in one-letter code: D-galactonate dehydratase family member SSLG_02014 (442 aa).

Residue H161 coordinates substrate. The active-site Proton donor/acceptor is Y197. D246 is a binding site for Mg(2+). H248 functions as the Proton donor/acceptor in the catalytic mechanism. Mg(2+)-binding residues include E272 and E298. Substrate is bound by residues E298, R319, H348, D352, and E375.

This sequence belongs to the mandelate racemase/muconate lactonizing enzyme family. GalD subfamily. Mg(2+) serves as cofactor.

It catalyses the reaction D-mannonate = 2-dehydro-3-deoxy-D-gluconate + H2O. Its function is as follows. Has low D-mannonate dehydratase activity (in vitro), suggesting that this is not a physiological substrate and that it has no significant role in D-mannonate degradation in vivo. Has no detectable activity with a panel of 70 other acid sugars (in vitro). This is D-galactonate dehydratase family member SSLG_02014 from Streptomyces sp. (strain SPB78).